The following is a 686-amino-acid chain: Alpha-amylase 1 (686 aa).

Glu125 acts as the Nucleophile in catalysis. Asp216 functions as the Proton donor in the catalytic mechanism.

It belongs to the glycosyl hydrolase 57 family.

It is found in the cytoplasm. The catalysed reaction is Endohydrolysis of (1-&gt;4)-alpha-D-glucosidic linkages in polysaccharides containing three or more (1-&gt;4)-alpha-linked D-glucose units.. Its function is as follows. This amylase is a highly liquefying-type: oligomers appeared at the beginning of incubation, followed by a graded decrease in the amounts of maltotriose, maltose and glucose in prolonged incubation. The polypeptide is Alpha-amylase 1 (amyA) (Dictyoglomus thermophilum (strain ATCC 35947 / DSM 3960 / H-6-12)).